Here is a 122-residue protein sequence, read N- to C-terminus: Large ribosomal subunit protein bL19 (122 aa).

It belongs to the bacterial ribosomal protein bL19 family.

Functionally, this protein is located at the 30S-50S ribosomal subunit interface and may play a role in the structure and function of the aminoacyl-tRNA binding site. In Mycoplasmoides gallisepticum (strain R(low / passage 15 / clone 2)) (Mycoplasma gallisepticum), this protein is Large ribosomal subunit protein bL19.